The sequence spans 159 residues: Ribosomal RNA large subunit methyltransferase H (159 aa).

S-adenosyl-L-methionine contacts are provided by residues Leu-76, Gly-108, and 127–132 (FGRLTL).

This sequence belongs to the RNA methyltransferase RlmH family. Homodimer.

It is found in the cytoplasm. The catalysed reaction is pseudouridine(1915) in 23S rRNA + S-adenosyl-L-methionine = N(3)-methylpseudouridine(1915) in 23S rRNA + S-adenosyl-L-homocysteine + H(+). In terms of biological role, specifically methylates the pseudouridine at position 1915 (m3Psi1915) in 23S rRNA. In Streptococcus uberis (strain ATCC BAA-854 / 0140J), this protein is Ribosomal RNA large subunit methyltransferase H.